The sequence spans 859 residues: Collagen alpha-1(II) chain (859 aa).

The tract at residues 1–607 is disordered; that stretch reads LQGLPGKDGE…LGQTEKGPDP (607 aa). 4-hydroxyproline is present on residues proline 31 and proline 40. Proline 42 carries the post-translational modification 3-hydroxyproline. Proline 43 and proline 46 each carry 4-hydroxyproline. Low complexity predominate over residues 78–121; the sequence is ERGSPGAQGLQGPRGLPGTPGTDGPKGATGPAGPNGAQGPPGLQ. Over residues 136 to 147 the composition is skewed to basic and acidic residues; the sequence is KGDRGDVGEKGP. Composition is skewed to low complexity over residues 204–220 and 249–277; these read PAGF…PGAK and PTGV…AGRV. Residue proline 279 is modified to 3-hydroxyproline. A compositionally biased stretch (pro residues) spans 279–292; that stretch reads PPGPNGNPGPPGPP. 4-hydroxyproline occurs at positions 280, 286, and 292. Residues 306–321 are compositionally biased toward low complexity; sequence DAGPPGRAGDPGLQGP. Over residues 487 to 501 the composition is skewed to basic and acidic residues; it reads RGDKGETGEAGERGL. Positions 491–586 are triple-helical region; that stretch reads GETGEAGERG…PGPPGPPGPP (96 aa). Position 516 is a 3-hydroxyproline (proline 516). A compositionally biased stretch (low complexity) spans 520-529; the sequence is SGDQGAAGPA. Residue proline 553 is modified to 4-hydroxyproline. Position 558 is a 3-hydroxyproline (proline 558). Residue proline 559 is modified to 4-hydroxyproline. The segment covering 570–586 has biased composition (pro residues); sequence PAGPPGNPGPPGPPGPP. Proline 573 carries the post-translational modification 3-hydroxyproline. 4-hydroxyproline is present on residues proline 574 and proline 577. 3-hydroxyproline is present on proline 579. 2 positions are modified to 4-hydroxyproline: proline 580 and proline 583. A 3-hydroxyproline modification is found at proline 585. 4-hydroxyproline is present on proline 586. Residues 587 to 613 form a nonhelical region (C-terminal) region; that stretch reads GTGIDMSAFAGLGQTEKGPDPIRYMRA. A propeptide spans 614–859 (C-terminal propeptide); it reads DEAAGGLRQH…GVDIGPVCFL (246 aa). The Fibrillar collagen NC1 domain occupies 625 to 859; the sequence is VEVDATLKSL…GVDIGPVCFL (235 aa). 3 disulfides stabilise this stretch: cysteine 655–cysteine 687, cysteine 695–cysteine 857, and cysteine 765–cysteine 810. The Ca(2+) site is built by aspartate 673, asparagine 675, glutamine 676, cysteine 678, and aspartate 681. Residue asparagine 760 is glycosylated (N-linked (GlcNAc...) asparagine).

It belongs to the fibrillar collagen family. In terms of assembly, homotrimers of alpha 1(II) chains. Post-translationally, contains mostly 4-hydroxyproline. Prolines at the third position of the tripeptide repeating unit (G-X-P) are 4-hydroxylated in some or all of the chains. In terms of processing, contains 3-hydroxyproline at a few sites. This modification occurs on the first proline residue in the sequence motif Gly-Pro-Hyp, where Hyp is 4-hydroxyproline. Lysine residues at the third position of the tripeptide repeating unit (G-X-Y) are 5-hydroxylated in some or all of the chains. Post-translationally, O-glycosylated on hydroxylated lysine residues. The O-linked glycan consists of a Glc-Gal disaccharide.

It is found in the secreted. Its subcellular location is the extracellular space. The protein localises to the extracellular matrix. Its function is as follows. Type II collagen is specific for cartilaginous tissues. It is essential for the normal embryonic development of the skeleton, for linear growth and for the ability of cartilage to resist compressive forces. This chain is Collagen alpha-1(II) chain, found in Gallus gallus (Chicken).